The chain runs to 111 residues: Photosystem II reaction center Psb28 protein (111 aa).

The protein belongs to the Psb28 family. As to quaternary structure, part of the photosystem II complex.

The protein localises to the cellular thylakoid membrane. The protein is Photosystem II reaction center Psb28 protein of Gloeothece citriformis (strain PCC 7424) (Cyanothece sp. (strain PCC 7424)).